The sequence spans 301 residues: Porphobilinogen deaminase (301 aa).

Cysteine 235 is modified (S-(dipyrrolylmethanemethyl)cysteine).

It belongs to the HMBS family. In terms of assembly, monomer. Dipyrromethane is required as a cofactor.

The enzyme catalyses 4 porphobilinogen + H2O = hydroxymethylbilane + 4 NH4(+). Its pathway is porphyrin-containing compound metabolism; protoporphyrin-IX biosynthesis; coproporphyrinogen-III from 5-aminolevulinate: step 2/4. In terms of biological role, tetrapolymerization of the monopyrrole PBG into the hydroxymethylbilane pre-uroporphyrinogen in several discrete steps. The sequence is that of Porphobilinogen deaminase from Thermus thermophilus (strain ATCC BAA-163 / DSM 7039 / HB27).